The sequence spans 226 residues: Thiamine-phosphate synthase (226 aa).

4-amino-2-methyl-5-(diphosphooxymethyl)pyrimidine-binding positions include 46–50 (QFRDK) and aspartate 83. Positions 84 and 103 each coordinate Mg(2+). Serine 122 is a 4-amino-2-methyl-5-(diphosphooxymethyl)pyrimidine binding site. A 2-[(2R,5Z)-2-carboxy-4-methylthiazol-5(2H)-ylidene]ethyl phosphate-binding site is contributed by 149–151 (TQS). Position 152 (lysine 152) interacts with 4-amino-2-methyl-5-(diphosphooxymethyl)pyrimidine. 2-[(2R,5Z)-2-carboxy-4-methylthiazol-5(2H)-ylidene]ethyl phosphate contacts are provided by residues glycine 181 and 201 to 202 (IT).

The protein belongs to the thiamine-phosphate synthase family. Mg(2+) serves as cofactor.

It catalyses the reaction 2-[(2R,5Z)-2-carboxy-4-methylthiazol-5(2H)-ylidene]ethyl phosphate + 4-amino-2-methyl-5-(diphosphooxymethyl)pyrimidine + 2 H(+) = thiamine phosphate + CO2 + diphosphate. It carries out the reaction 2-(2-carboxy-4-methylthiazol-5-yl)ethyl phosphate + 4-amino-2-methyl-5-(diphosphooxymethyl)pyrimidine + 2 H(+) = thiamine phosphate + CO2 + diphosphate. The enzyme catalyses 4-methyl-5-(2-phosphooxyethyl)-thiazole + 4-amino-2-methyl-5-(diphosphooxymethyl)pyrimidine + H(+) = thiamine phosphate + diphosphate. It participates in cofactor biosynthesis; thiamine diphosphate biosynthesis; thiamine phosphate from 4-amino-2-methyl-5-diphosphomethylpyrimidine and 4-methyl-5-(2-phosphoethyl)-thiazole: step 1/1. In terms of biological role, condenses 4-methyl-5-(beta-hydroxyethyl)thiazole monophosphate (THZ-P) and 2-methyl-4-amino-5-hydroxymethyl pyrimidine pyrophosphate (HMP-PP) to form thiamine monophosphate (TMP). In Haemophilus influenzae (strain PittGG), this protein is Thiamine-phosphate synthase.